A 234-amino-acid polypeptide reads, in one-letter code: MSLAHSLICGCLMRESTEDTARFLEYPGIGLVEWRLDALHGIHTRNGLDEALAGLSLPGRHPVIATVRPERFRGGFRGTEEARIRALERTVRAGAEWIDLEDDLPEDVLSPFRDSAARVVISHHDFDGTPASDPLKHRVEHLATLGAHVLKIATYARTVEDNLRVLELIPFARKQFGAETIAFCMGPTGRWSRLACLLMGSPWTYVRFPELPASAPGQFTVAQMQTLLEIVGAG.

3-dehydroquinate contacts are provided by residues 33-35 (EWR) and arginine 68. Residue histidine 124 is the Proton donor/acceptor of the active site. Lysine 151 acts as the Schiff-base intermediate with substrate in catalysis. Arginine 193, serine 214, and glutamine 218 together coordinate 3-dehydroquinate.

The protein belongs to the type-I 3-dehydroquinase family. Homodimer.

It carries out the reaction 3-dehydroquinate = 3-dehydroshikimate + H2O. The protein operates within metabolic intermediate biosynthesis; chorismate biosynthesis; chorismate from D-erythrose 4-phosphate and phosphoenolpyruvate: step 3/7. In terms of biological role, involved in the third step of the chorismate pathway, which leads to the biosynthesis of aromatic amino acids. Catalyzes the cis-dehydration of 3-dehydroquinate (DHQ) and introduces the first double bond of the aromatic ring to yield 3-dehydroshikimate. The sequence is that of 3-dehydroquinate dehydratase from Syntrophobacter fumaroxidans (strain DSM 10017 / MPOB).